The sequence spans 458 residues: MKASKGRNVVVVGTQWGDEGKGKLVDWLTESAQGVVRFQGGHNAGHTLVINGVKTALHLIPSGIMRPGVKCYIGNGVVLSAGKLFEEIEGLEKAGVEVRSRLRVSEACPLILPFHAALDVAREAAREHGGAEKIGTTGRGIGPAYEDKIARRALRVQDLKYPERFAAKLRELLALHNHVLSTFLGSANFQFGDALKPYITGGQVQFEPVFDEAMRHAEMLKPMMADVSRELNEAHAAGANLLFEGAQGTLLDVDHGTYPYVTSSNCVAGNAAAGSGVGPGHLHYILGITKAYCTRVGGGPFPTELDWETPGTPGYHMSTVGAEKGVTTGRSRRCGWFDAALLKRSAQVNGLSGLCITKLDVLDGLRELSLCVGYELDGERIDLLPMGAEEIARCVPIYENIAGWTESTVGVTRYEDLPSNARRYLERIEQVTGVPIAMISTSPDRDHTILMRHPYAAD.

Residues 17–23 and 45–47 contribute to the GTP site; these read GDEGKGK and GHT. Residue Asp18 is the Proton acceptor of the active site. Residues Asp18 and Gly45 each coordinate Mg(2+). IMP contacts are provided by residues 18 to 21, 43 to 46, Thr137, Arg151, Gln247, Thr262, and Arg330; these read DEGK and NAGH. His46 acts as the Proton donor in catalysis. Substrate is bound at residue 326-332; that stretch reads VTTGRSR. Residues Arg332, 358 to 360, and 440 to 442 each bind GTP; these read KLD and STS.

The protein belongs to the adenylosuccinate synthetase family. As to quaternary structure, homodimer. Mg(2+) serves as cofactor.

It is found in the cytoplasm. It carries out the reaction IMP + L-aspartate + GTP = N(6)-(1,2-dicarboxyethyl)-AMP + GDP + phosphate + 2 H(+). The protein operates within purine metabolism; AMP biosynthesis via de novo pathway; AMP from IMP: step 1/2. Plays an important role in the de novo pathway of purine nucleotide biosynthesis. Catalyzes the first committed step in the biosynthesis of AMP from IMP. The protein is Adenylosuccinate synthetase of Acidovorax ebreus (strain TPSY) (Diaphorobacter sp. (strain TPSY)).